Reading from the N-terminus, the 98-residue chain is Cystatin-B (98 aa).

Position 1 is an N-acetylmethionine (Met1). Positions 46-50 match the Secondary area of contact motif; sequence QLVAG.

This sequence belongs to the cystatin family. As to quaternary structure, able to form dimers stabilized by noncovalent forces.

The protein resides in the cytoplasm. In terms of biological role, this is an intracellular thiol proteinase inhibitor. This is Cystatin-B (CSTB) from Ovis aries (Sheep).